A 740-amino-acid polypeptide reads, in one-letter code: DNA ligase (740 aa).

Residues 1–20 form a disordered region; it reads MGPGLTLSGMTEQSSLFPAP. NAD(+)-binding positions include 56–60, 105–106, and E142; these read DAEYD and SI. K144 serves as the catalytic N6-AMP-lysine intermediate. NAD(+) is bound by residues R165, E201, K322, and K346. Positions 471, 474, 489, and 495 each coordinate Zn(2+). In terms of domain architecture, BRCT spans 654–740; that stretch reads AATLPLAGMT…RGAPPNAGGG (87 aa).

It belongs to the NAD-dependent DNA ligase family. LigA subfamily. It depends on Mg(2+) as a cofactor. Requires Mn(2+) as cofactor.

The catalysed reaction is NAD(+) + (deoxyribonucleotide)n-3'-hydroxyl + 5'-phospho-(deoxyribonucleotide)m = (deoxyribonucleotide)n+m + AMP + beta-nicotinamide D-nucleotide.. Functionally, DNA ligase that catalyzes the formation of phosphodiester linkages between 5'-phosphoryl and 3'-hydroxyl groups in double-stranded DNA using NAD as a coenzyme and as the energy source for the reaction. It is essential for DNA replication and repair of damaged DNA. The polypeptide is DNA ligase (Acidovorax ebreus (strain TPSY) (Diaphorobacter sp. (strain TPSY))).